Here is a 305-residue protein sequence, read N- to C-terminus: RxLR effector protein 17 (305 aa).

A signal peptide spans 1–24 (MQSILWFALIASVVFLVLVDLASG). The short motif at 45-60 (RLLRAAHLDRKLSEER) is the RxLR-dEER element. Asparagine 207 and asparagine 227 each carry an N-linked (GlcNAc...) asparagine glycan. The interval 247–269 (LHLKWAVEAKSPKDVVERILKDL) is w motif.

Belongs to the RxLR effector family. Interacts with host A.thaliana At1G14340.

It localises to the secreted. Its subcellular location is the host cell membrane. Its function is as follows. Secreted effector that confers enhanced plant susceptibility during both compatible and incompatible interactions between the pathogen and its host. Promotes the sexual reproduction of the pathogen in the plant host. This Hyaloperonospora arabidopsidis (strain Emoy2) (Downy mildew agent) protein is RxLR effector protein 17.